The sequence spans 234 residues: Glucosamine-6-phosphate deaminase (234 aa).

Catalysis depends on aspartate 62, which acts as the Proton acceptor; for enolization step. Asparagine 128 serves as the catalytic For ring-opening step. Histidine 130 (proton acceptor; for ring-opening step) is an active-site residue. Glutamate 135 acts as the For ring-opening step in catalysis.

The protein belongs to the glucosamine/galactosamine-6-phosphate isomerase family. NagB subfamily.

It carries out the reaction alpha-D-glucosamine 6-phosphate + H2O = beta-D-fructose 6-phosphate + NH4(+). It functions in the pathway amino-sugar metabolism; N-acetylneuraminate degradation; D-fructose 6-phosphate from N-acetylneuraminate: step 5/5. Catalyzes the reversible isomerization-deamination of glucosamine 6-phosphate (GlcN6P) to form fructose 6-phosphate (Fru6P) and ammonium ion. The protein is Glucosamine-6-phosphate deaminase of Streptococcus pyogenes serotype M1.